A 343-amino-acid chain; its full sequence is Pseudaminic acid synthase (343 aa).

One can recognise an AFP-like domain in the interval 287 to 343; the sequence is SLYASKDIKKGEMFSEENVKSVRPSFGLHPKFYQELLGKKASKDIKFGDALKQGDFQ.

It belongs to the pseudaminic acid synthase family. The cofactor is a divalent metal cation.

The catalysed reaction is 2,4-diacetamido-2,4,6-trideoxy-beta-L-altrose + phosphoenolpyruvate + H2O = pseudaminate + phosphate. Its function is as follows. Catalyzes the fifth step in the biosynthesis of pseudaminic acid, a sialic-acid-like sugar that is used to modify flagellin. Catalyzes the condensation of phosphoenolpyruvate with 2,4-diacetamido-2,4,6-trideoxy-beta-l-altropyranose, forming pseudaminic acid. This Campylobacter jejuni subsp. jejuni serotype O:2 (strain ATCC 700819 / NCTC 11168) protein is Pseudaminic acid synthase (pseI).